The chain runs to 124 residues: Small ribosomal subunit protein uS12 (124 aa).

Asp89 bears the 3-methylthioaspartic acid mark.

Belongs to the universal ribosomal protein uS12 family. As to quaternary structure, part of the 30S ribosomal subunit. Contacts proteins S8 and S17. May interact with IF1 in the 30S initiation complex.

Functionally, with S4 and S5 plays an important role in translational accuracy. Interacts with and stabilizes bases of the 16S rRNA that are involved in tRNA selection in the A site and with the mRNA backbone. Located at the interface of the 30S and 50S subunits, it traverses the body of the 30S subunit contacting proteins on the other side and probably holding the rRNA structure together. The combined cluster of proteins S8, S12 and S17 appears to hold together the shoulder and platform of the 30S subunit. In Aeromonas hydrophila subsp. hydrophila (strain ATCC 7966 / DSM 30187 / BCRC 13018 / CCUG 14551 / JCM 1027 / KCTC 2358 / NCIMB 9240 / NCTC 8049), this protein is Small ribosomal subunit protein uS12.